Here is a 423-residue protein sequence, read N- to C-terminus: MSASSPDQRLDHLLSAVESEFQKGSEKGDASERDIKLSLEDAELWTKFKELTNEMIVTKTGRRMFPVLRASVTGLDPNAMYSVLLDFVAADNNRWKYVNGEWVPGGKPEPQSPSCVYIHPDSPNFGAHWMKAPVSFSKVKLSNKLNGGGQIMLNSLHKYEPRIHIVKVGGIQKMISSQSFPETQFIAVTAYQNEEITALKIKHNPFAKAFLDAKERSDHKEVPDHSTDNQQSGYSQLGGWFLPSNGPMGPSSSPPQFNGAPVHSSGSYCERYSSLRNHRAAPYPSHYSHRSTTTNNYMDNSSGSLASHDSWSALQIPNSSGMGTLAHTTNTTSNTSQYPSLWSVAGTTLTPSGSASGSITGGLTSQFLRGSSMSYSGLTSSLPVSSPSSMYDPGLSEVGVGDAQFESSIARLTASWAPVAQSY.

Residues 44 to 212 (LWTKFKELTN…HNPFAKAFLD (169 aa)) constitute a DNA-binding region (T-box). Basic and acidic residues predominate over residues 215–227 (ERSDHKEVPDHST). Disordered regions lie at residues 215 to 234 (ERSD…QSGY) and 280 to 304 (AAPY…SSGS). Polar residues predominate over residues 290–304 (RSTTTNNYMDNSSGS).

As to quaternary structure, monomer. Binds DNA as a monomer. First expressed at the dorsal side of the blastula embryo. Expressed in the germ ring, shield and chordamesoderm during gastrulation and is restricted to the notochord and tailbud during somitogenesis (at protein level).

Its subcellular location is the nucleus. Its function is as follows. Involved in the transcriptional regulation of genes required for mesoderm differentiation, including itself. Indispensable for the formation of the notochord and the tail structure. Functions together with tbx16/spadetail in development of trunk and tail mesoderm. Functions by itself early in development to repress medial floor plate and promote notochord fate but at later times, functions together with tbx16/spadetail to promote medial floor plate formation. Acts in a parallel pathway to, but cooperates with, non-canonical wnt-signaling during tail formation. Required for the morphogenesis of Kupffer's vesicle and regulates left-right asymmetry. The chain is T-box transcription factor T-A (tbxta) from Danio rerio (Zebrafish).